The sequence spans 262 residues: ATP synthase subunit a (262 aa).

6 helical membrane-spanning segments follow: residues A24–F44, V84–L104, D129–V149, P165–A185, L194–A214, and L228–L248.

Belongs to the ATPase A chain family. In terms of assembly, F-type ATPases have 2 components, CF(1) - the catalytic core - and CF(0) - the membrane proton channel. CF(1) has five subunits: alpha(3), beta(3), gamma(1), delta(1), epsilon(1). CF(0) has three main subunits: a(1), b(2) and c(9-12). The alpha and beta chains form an alternating ring which encloses part of the gamma chain. CF(1) is attached to CF(0) by a central stalk formed by the gamma and epsilon chains, while a peripheral stalk is formed by the delta and b chains.

The protein resides in the cell inner membrane. In terms of biological role, key component of the proton channel; it plays a direct role in the translocation of protons across the membrane. In Actinobacillus pleuropneumoniae serotype 7 (strain AP76), this protein is ATP synthase subunit a.